The primary structure comprises 205 residues: uncharacterized protein (205 aa).

Positions 1 to 19 (MKTLCVLSIFLALLGGLCT) are cleaved as a signal peptide. The segment covering 40 to 133 (VSSVASTSTP…PKTSKNNPKT (94 aa)) has biased composition (low complexity). Positions 40 to 135 (VSSVASTSTP…TSKNNPKTQE (96 aa)) are disordered. A helical transmembrane segment spans residues 147 to 167 (GILYLFILLLIIFVIILICFI).

The protein localises to the host membrane. This is an uncharacterized protein from Equine herpesvirus 2 (strain 86/87) (EHV-2).